Reading from the N-terminus, the 182-residue chain is Proline-rich protein, Y-linked (182 aa).

Disordered stretches follow at residues 1-22 and 89-108; these read MMRR…KPRD and VPAD…PPPG. A compositionally biased stretch (pro residues) spans 91–108; that stretch reads ADPPPASPYRTSPRPPPG. The 14-residue stretch at 154–167 folds into the DUF1725 domain; that stretch reads WMKLETIILSKLSQ.

The polypeptide is Proline-rich protein, Y-linked (PRORY) (Homo sapiens (Human)).